A 102-amino-acid polypeptide reads, in one-letter code: Large ribosomal subunit protein uL24 (102 aa).

It belongs to the universal ribosomal protein uL24 family. In terms of assembly, part of the 50S ribosomal subunit.

One of two assembly initiator proteins, it binds directly to the 5'-end of the 23S rRNA, where it nucleates assembly of the 50S subunit. In terms of biological role, one of the proteins that surrounds the polypeptide exit tunnel on the outside of the subunit. The chain is Large ribosomal subunit protein uL24 from Alcanivorax borkumensis (strain ATCC 700651 / DSM 11573 / NCIMB 13689 / SK2).